The chain runs to 164 residues: Phosphopantetheine adenylyltransferase (164 aa).

Serine 11 contacts substrate. ATP is bound by residues 11-12 (SF) and histidine 19. Residues lysine 43, alanine 76, and arginine 90 each coordinate substrate. ATP is bound by residues 91 to 93 (GLR), glutamate 101, and 126 to 132 (YQHISSS).

Belongs to the bacterial CoaD family. Homohexamer. Mg(2+) serves as cofactor.

It is found in the cytoplasm. It carries out the reaction (R)-4'-phosphopantetheine + ATP + H(+) = 3'-dephospho-CoA + diphosphate. Its pathway is cofactor biosynthesis; coenzyme A biosynthesis; CoA from (R)-pantothenate: step 4/5. Reversibly transfers an adenylyl group from ATP to 4'-phosphopantetheine, yielding dephospho-CoA (dPCoA) and pyrophosphate. The polypeptide is Phosphopantetheine adenylyltransferase (Streptococcus gordonii (strain Challis / ATCC 35105 / BCRC 15272 / CH1 / DL1 / V288)).